We begin with the raw amino-acid sequence, 334 residues long: Putative heme-binding peroxidase (334 aa).

Residue His40 is the Proton acceptor of the active site. His169 contacts heme b. Trp185 (tryptophan radical intermediate) is an active-site residue.

The protein belongs to the peroxidase family. Cytochrome c peroxidase subfamily. Heme b is required as a cofactor.

Destroys radicals which are normally produced within the cells and which are toxic to biological systems. The protein is Putative heme-binding peroxidase of Cryptococcus neoformans var. neoformans serotype D (strain JEC21 / ATCC MYA-565) (Filobasidiella neoformans).